The chain runs to 1050 residues: MTDPLIHTRKVMGFVRDPLPTTGALSLKSTNARADLEWLGWRNVESIPLMWALSGAGDPDVALNQLVRMYQTLESQSPQAREELDQRIRADEAFRVRLLALLGGSSAMGDHLVANTHLWELLTEEAPTRAEMFTAMLESVGATPAEVVPVDDEGEERQVANTATEDLTTPGTYRATLTGVDAERALRFTYRTLMMRLAALDLAGTYPNDARRRSQPRVEFTTVTRRLSNLADAALTAALAVAVTGVYGQKPVDARLSVMAMGKCGAQELNYISDVDVIFIAEPAHSRSTRLAAEFIRTGCSSFFEVDAALRPEGKSGALVRTLESHIAYYKRWAETWEFQALLKARPMTGDMDLGQAYLDAIGPMVWTASQRDSFVDDIQAMRRRVLENVPEELRDRELKLGRGGLRDVEFAVQLLQMVHGRYDETLRVRSTVEALQVLVDQGYIGREDGHNLIESYEFLRLLEHRLQLERVKRTHTMPKVEDRMNMRWLARASGFTGSGGQSSARAMEHHLRRVRLQIQSLHSQLFYRPLLNSVVNLSVDAMKLSQEAAKLQLGALGYQHPVRAYEHLTALASGTSRKAKIQAMLLPTLMEWLSQTADPDAGLLNYRKLSDAAYDRSWFLRMLRDEGVVGQRLMRILGTSPYTSELIIATPDFVSELGDGTTGPKLLETAPDRVCKALKATVARHDDPDRAIQAARSLRRQELARVASADLLNLLTVQEVCHSLSLVWDAVLDAALEAEIRAATADPAKPDEPLAAISVIGMGRLGGAELGYGSDADVMFVAEPAPGVDENEAIAWAISVCESMRSRLAKPSGDPPLEVDLGLRPEGRSGAVVRTIESYENYYAKWGETWEVQALLRASWVAGDRELGTRFLETIDKFRYPAGGASDAQIREVRRMKARVDNERLPRGADRNTHTKLGRGALADIEWTVQLLTMLHAHEHPELHNTSTLEVLEVVEEKGIINPLQAQTLREAWLTATAARNALVLVKGKRADQLPPPGRHLAQVAGAAGWDPDEYQEYLDHYLKVTRKSRQVVEEVFWGLDSVEARREL.

The tract at residues 1–531 is adenylyl removase; it reads MTDPLIHTRK…LHSQLFYRPL (531 aa). An adenylyl transferase region spans residues 537 to 1050; it reads NLSVDAMKLS…LDSVEARREL (514 aa).

The protein belongs to the GlnE family. Requires Mg(2+) as cofactor.

It carries out the reaction [glutamine synthetase]-O(4)-(5'-adenylyl)-L-tyrosine + phosphate = [glutamine synthetase]-L-tyrosine + ADP. It catalyses the reaction [glutamine synthetase]-L-tyrosine + ATP = [glutamine synthetase]-O(4)-(5'-adenylyl)-L-tyrosine + diphosphate. In terms of biological role, involved in the regulation of glutamine synthetase GlnA, a key enzyme in the process to assimilate ammonia. When cellular nitrogen levels are high, the C-terminal adenylyl transferase (AT) inactivates GlnA by covalent transfer of an adenylyl group from ATP to specific tyrosine residue of GlnA, thus reducing its activity. Conversely, when nitrogen levels are low, the N-terminal adenylyl removase (AR) activates GlnA by removing the adenylyl group by phosphorolysis, increasing its activity. The regulatory region of GlnE binds the signal transduction protein PII (GlnB) which indicates the nitrogen status of the cell. The sequence is that of Bifunctional glutamine synthetase adenylyltransferase/adenylyl-removing enzyme from Corynebacterium efficiens (strain DSM 44549 / YS-314 / AJ 12310 / JCM 11189 / NBRC 100395).